A 212-amino-acid chain; its full sequence is Regulatory protein RecX (212 aa).

It belongs to the RecX family.

It localises to the cytoplasm. Its function is as follows. Modulates RecA activity. The sequence is that of Regulatory protein RecX from Clostridium botulinum (strain Alaska E43 / Type E3).